The following is a 141-amino-acid chain: Putative pre-16S rRNA nuclease (141 aa).

The protein belongs to the YqgF nuclease family.

The protein localises to the cytoplasm. In terms of biological role, could be a nuclease involved in processing of the 5'-end of pre-16S rRNA. The sequence is that of Putative pre-16S rRNA nuclease from Clostridioides difficile (strain 630) (Peptoclostridium difficile).